The following is a 219-amino-acid chain: Probable GTP-binding protein EngB (219 aa).

Residues 40–212 enclose the EngB-type G domain; it reads LLPEIAFIGK…KASLAKCIIK (173 aa). Residues 48-55, 75-79, 93-96, 160-163, and 191-193 each bind GTP; these read GKSNVGKS, GRTGQ, DLPG, TKFD, and VSS. 2 residues coordinate Mg(2+): Ser-55 and Thr-77.

This sequence belongs to the TRAFAC class TrmE-Era-EngA-EngB-Septin-like GTPase superfamily. EngB GTPase family. Mg(2+) is required as a cofactor.

Necessary for normal cell division and for the maintenance of normal septation. In Rickettsia canadensis (strain McKiel), this protein is Probable GTP-binding protein EngB.